The chain runs to 276 residues: Pantothenate synthetase (276 aa).

27 to 34 (MGALHKGH) serves as a coordination point for ATP. The Proton donor role is filled by H34. Residue Q58 coordinates (R)-pantoate. Q58 contacts beta-alanine. 147 to 150 (GKKD) lines the ATP pocket. (R)-pantoate is bound at residue Q153. ATP is bound by residues V176 and 184–187 (LSSR).

It belongs to the pantothenate synthetase family. Homodimer.

The protein localises to the cytoplasm. The catalysed reaction is (R)-pantoate + beta-alanine + ATP = (R)-pantothenate + AMP + diphosphate + H(+). It participates in cofactor biosynthesis; (R)-pantothenate biosynthesis; (R)-pantothenate from (R)-pantoate and beta-alanine: step 1/1. In terms of biological role, catalyzes the condensation of pantoate with beta-alanine in an ATP-dependent reaction via a pantoyl-adenylate intermediate. The polypeptide is Pantothenate synthetase (Helicobacter pylori (strain ATCC 700392 / 26695) (Campylobacter pylori)).